Reading from the N-terminus, the 554-residue chain is Sesquiterpene synthase 14a (554 aa).

Mg(2+) contacts are provided by Asp305, Asp309, Asp449, and Glu457. The DDXXD motif motif lies at 305–309 (DDLYD).

Belongs to the terpene synthase family. Tpsa subfamily. The cofactor is Mg(2+). Mn(2+) serves as cofactor. Mostly expressed in stem trichomes.

It catalyses the reaction (2E,6E)-farnesyl diphosphate = beta-bisabolene + diphosphate. The catalysed reaction is (2E,6E)-farnesyl diphosphate = (Z)-alpha-bisabolene + diphosphate. It carries out the reaction (2E,6E)-farnesyl diphosphate = beta-acoradiene + diphosphate. The enzyme catalyses (2E,6E)-farnesyl diphosphate = (E)-gamma-bisabolene + diphosphate. It catalyses the reaction (2E,6E)-farnesyl diphosphate = (E)-beta-farnesene + diphosphate. The catalysed reaction is (2E,6E)-farnesyl diphosphate = (Z)-beta-farnesene + diphosphate. It carries out the reaction (2E)-geranyl diphosphate = limonene + diphosphate. The enzyme catalyses (2E)-geranyl diphosphate = beta-myrcene + diphosphate. It functions in the pathway secondary metabolite biosynthesis; terpenoid biosynthesis. Functionally, sesquiterpene synthase involved in the biosynthesis of volatile compounds. Mediates the conversion of (2E,6E)-farnesyl diphosphate ((EE)-FPP) into beta-bisabolene, beta-farnesene, (E)-gamma-bisabolene, beta-acoradiene, selinene and (Z)-alpha-bisabolene. Low or no activity with (2Z,6Z)-farnesyl diphosphate ((ZZ)-FPP). Can act with a low efficiency as a monoterpene synthase with geranyl diphosphate (GPP) as substrate, thus producing beta-myrcene and limonene. This is Sesquiterpene synthase 14a from Solanum habrochaites (Wild tomato).